The sequence spans 440 residues: Muscarinic acetylcholine receptor M2 (440 aa).

Residues 1–19 (VLVAGSLSLVTIIGNILVM) form a helical membrane-spanning segment. The Cytoplasmic portion of the chain corresponds to 20-33 (VSIKVNRHLQTVNN). Residues 34–54 (YFLFSLACADLIIGVFSMNLY) form a helical membrane-spanning segment. Over 55 to 71 (TLYTVIGYWPLGPVVCD) the chain is Extracellular. Cysteines 70 and 150 form a disulfide. Residues 72–93 (LWLALDYVVSNASVMNLLIISF) traverse the membrane as a helical segment. An Important for signaling motif is present at residues 94-96 (DRY). The Cytoplasmic segment spans residues 94-113 (DRYFCVTKPLTYPVKRTTKM). A helical transmembrane segment spans residues 114–136 (AGMMIAAAWVLSFILWAPAILFW). Over 137 to 158 (QFIVGVRTVEDGECYIQFFSNA) the chain is Extracellular. Residues 159-183 (AVTFGTAIAAFYLPVIIMTVLYWHI) form a helical membrane-spanning segment. Topologically, residues 184-361 (SRASKSRIKK…PPSREKKVTR (178 aa)) are cytoplasmic. The segment at 192–329 (KKDKKEPVAN…VVGSSGQNGD (138 aa)) is disordered. Ser206 bears the Phosphoserine mark. A compositionally biased stretch (basic and acidic residues) spans 228–244 (GLEHNKIQNGKAPRDPV). 3 stretches are compositionally biased toward polar residues: residues 258-267 (NDSTSVSAVA), 278-287 (DENTVSTSLG), and 308-327 (SDSC…SGQN). The chain crosses the membrane as a helical span at residues 362 to 384 (TILAILLAFIITWAPYNVMVLIN). Residues 385–392 (TFCAPCIP) lie on the Extracellular side of the membrane. Cys387 and Cys390 are oxidised to a cystine. A helical membrane pass occupies residues 393 to 416 (NTVWTIGYWLCYINSTINPACYAL). Positions 410 to 414 (NPACY) match the Important for signaling motif. Residues 417-440 (CNATFKKTFKHLLMCHYKNIGATR) are Cytoplasmic-facing. Residues Thr420, Thr424, and Thr439 each carry the phosphothreonine modification.

It belongs to the G-protein coupled receptor 1 family. Muscarinic acetylcholine receptor subfamily. CHRM2 sub-subfamily. As to quaternary structure, interacts with ARRB1 and ARRB2. Interacts with RACK1; the interaction regulates CHRM2 internalization. Phosphorylated in response to agonist treatment.

The protein localises to the cell membrane. It localises to the postsynaptic cell membrane. Its function is as follows. The muscarinic acetylcholine receptor mediates various cellular responses, including inhibition of adenylate cyclase, breakdown of phosphoinositides and modulation of potassium channels through the action of G proteins. Primary transducing effect is adenylate cyclase inhibition. Signaling promotes phospholipase C activity, leading to the release of inositol trisphosphate (IP3); this then triggers calcium ion release into the cytosol. This Pan troglodytes (Chimpanzee) protein is Muscarinic acetylcholine receptor M2 (CHRM2).